Here is a 1836-residue protein sequence, read N- to C-terminus: InaD-like protein (1836 aa).

The region spanning 1 to 65 is the L27 domain; it reads MPENPAAEKM…SIKQLKGQLS (65 aa). PDZ domains are found at residues 134–221, 248–328, and 365–453; these read YIDI…AREV, DVEL…ARDP, and NVEL…VRRK. Phosphoserine is present on residues serine 455, serine 459, and serine 482. Positions 456 to 466 are enriched in polar residues; that stretch reads LSASPFEQPSS. The interval 456–492 is disordered; that stretch reads LSASPFEQPSSREAVAEPPEVPELTGSLKPETNSRME. Residues 555–641 enclose the PDZ 4 domain; that stretch reads DEELQKYSKL…PFTLVCCRRL (87 aa). A Phosphoserine modification is found at serine 647. PDZ domains lie at 687–773 and 1074–1166; these read TVEL…ICKP and PRIV…VVQS. The span at 1173–1191 shows a compositional bias: polar residues; it reads VIPSVNNKGKTPPQNQDQN. The interval 1173–1232 is disordered; the sequence is VIPSVNNKGKTPPQNQDQNTQEKKAKRHGTAPPPMKLPPPYRAPSADTEESEEDSALTDK. Residues 1203-1214 show a composition bias toward pro residues; the sequence is APPPMKLPPPYR. Serine 1217 carries the post-translational modification Phosphoserine. Over residues 1219 to 1228 the composition is skewed to acidic residues; the sequence is DTEESEEDSA. Residues 1245–1328 enclose the PDZ 7 domain; that stretch reads LHIIELEKDK…PTRVKLVFIR (84 aa). Residues 1341 to 1448 form a disordered region; that stretch reads FPVPSHSPSP…ADVTGSGNFQ (108 aa). The span at 1372–1383 shows a compositional bias: basic and acidic residues; the sequence is PLPERESSKPED. Composition is skewed to polar residues over residues 1415-1426 and 1434-1448; these read YSAQVSSSSQEI and CQSTHADVTGSGNFQ. PDZ domains lie at 1472-1555 and 1568-1650; these read EMII…VIYR and VFLV…EIGR. Position 1545 is a phosphothreonine (threonine 1545). Residues 1657-1678 are disordered; that stretch reads ASSRKTSQNSQGDQHSAHSSCR. The 87-residue stretch at 1709-1795 folds into the PDZ 10 domain; that stretch reads PRTVEIIREL…FGRIILQVVA (87 aa). Positions 1813–1836 are disordered; the sequence is SQLGSPTADRHPQDPEELLQRTAD.

As to quaternary structure, forms a ternary complex with PALS1 and CRB1. Component of a complex whose core is composed of ARHGAP17, AMOT, PALS1, INADL/PATJ and PARD3/PAR3. Forms a heterotrimeric complex composed of MMP5, LIN7B and PATJ; the N-terminal L27 domain of PALS1 interacts with the L27 domain of PATJ and the C-terminal L27 domain of PALS1 interacts with the L27 domain of LIN7B. Component of a complex composed of CRB3, PALS1 and PATJ. As part of the Crumbs complex; interacts with WWP1, the interaction is enhanced by AMOTL2 and facilitates WWP1 localization to the plasma membrane. The Crumbs complex promotes monoubiquitination of AMOTL2 by WWP1, which activates the Hippo signaling pathway. Interacts (via N-terminus) with PALS1/PALS (via PDZ domain). Interacts with TJP3/ZO-3 and CLDN1/claudin-1. Interacts with ASIC3, KCNJ10, KCNJ15, GRIN2A, GRIN2B, GRIN2C, GRIN2D, NLGN2, and HTR2A. Interacts with MPP7. Directly interacts with HTR4. Interacts (via PDZ domain 8) with WWC1 (via the ADDV motif). Interacts with SLC6A4. Interacts (via C-terminus) with ARHGEF18. Interacts with NPHP1. Interacts with PARD3/PAR3. Interacts (via PDZ1-6 domains) with TJP1/ZO1; the interaction is required for attachment and extension of TJP1/ZO1 condensates along the apical cell interface. Abundantly expressed in germ cells, also expressed in testes and seminiferous tubules, with faint expression in Sertoli cells (at protein level).

The protein resides in the cell junction. It localises to the tight junction. The protein localises to the apical cell membrane. Its subcellular location is the cytoplasm. It is found in the perinuclear region. Functionally, scaffolding protein that facilitates the localization of proteins to the cell membrane. Required for the correct formation of tight junctions and epithelial apico-basal polarity. Acts (via its L27 domain) as an apical connector and elongation factor for multistranded TJP1/ZO1 condensates that form a tight junction belt, thereby required for the formation of the tight junction-mediated cell barrier. Positively regulates epithelial cell microtubule elongation and cell migration, possibly via facilitating localization of PRKCI/aPKC and PAR3D/PAR3 at the leading edge of migrating cells. Plays a role in the correct reorientation of the microtubule-organizing center during epithelial migration. May regulate the surface expression and/or function of ASIC3 in sensory neurons. May recruit ARHGEF18 to apical cell-cell boundaries. In Rattus norvegicus (Rat), this protein is InaD-like protein.